Consider the following 327-residue polypeptide: Porphobilinogen deaminase (327 aa).

An S-(dipyrrolylmethanemethyl)cysteine modification is found at Cys250.

Belongs to the HMBS family. In terms of assembly, monomer. Dipyrromethane is required as a cofactor.

The catalysed reaction is 4 porphobilinogen + H2O = hydroxymethylbilane + 4 NH4(+). The protein operates within porphyrin-containing compound metabolism; protoporphyrin-IX biosynthesis; coproporphyrinogen-III from 5-aminolevulinate: step 2/4. Functionally, tetrapolymerization of the monopyrrole PBG into the hydroxymethylbilane pre-uroporphyrinogen in several discrete steps. This chain is Porphobilinogen deaminase, found in Paraburkholderia phymatum (strain DSM 17167 / CIP 108236 / LMG 21445 / STM815) (Burkholderia phymatum).